The sequence spans 352 residues: Histidinol-phosphate aminotransferase (352 aa).

An N6-(pyridoxal phosphate)lysine modification is found at Lys221.

The protein belongs to the class-II pyridoxal-phosphate-dependent aminotransferase family. Histidinol-phosphate aminotransferase subfamily. As to quaternary structure, homodimer. Pyridoxal 5'-phosphate serves as cofactor.

The enzyme catalyses L-histidinol phosphate + 2-oxoglutarate = 3-(imidazol-4-yl)-2-oxopropyl phosphate + L-glutamate. It participates in amino-acid biosynthesis; L-histidine biosynthesis; L-histidine from 5-phospho-alpha-D-ribose 1-diphosphate: step 7/9. In Staphylococcus aureus (strain MSSA476), this protein is Histidinol-phosphate aminotransferase.